A 476-amino-acid chain; its full sequence is Adenosylhomocysteinase (476 aa).

Positions 67, 142, and 202 each coordinate substrate. 203-205 (TTT) lines the NAD(+) pocket. 2 residues coordinate substrate: lysine 232 and aspartate 236. Residues asparagine 237, 266–271 (GYGDVG), glutamate 289, asparagine 324, 345–347 (IGH), and asparagine 390 contribute to the NAD(+) site.

It belongs to the adenosylhomocysteinase family. It depends on NAD(+) as a cofactor.

The protein resides in the cytoplasm. The catalysed reaction is S-adenosyl-L-homocysteine + H2O = L-homocysteine + adenosine. It participates in amino-acid biosynthesis; L-homocysteine biosynthesis; L-homocysteine from S-adenosyl-L-homocysteine: step 1/1. May play a key role in the regulation of the intracellular concentration of adenosylhomocysteine. The protein is Adenosylhomocysteinase of Prochlorococcus marinus (strain SARG / CCMP1375 / SS120).